A 315-amino-acid polypeptide reads, in one-letter code: Ribosomal RNA small subunit methyltransferase H (315 aa).

Residues 33–35 (GGH), D52, F84, D106, and Q113 each bind S-adenosyl-L-methionine. The segment at 290 to 315 (PITASTSELENNNRSHSAKLRVAEKL) is disordered. Positions 292 to 304 (TASTSELENNNRS) are enriched in polar residues.

The protein belongs to the methyltransferase superfamily. RsmH family.

The protein localises to the cytoplasm. The enzyme catalyses cytidine(1402) in 16S rRNA + S-adenosyl-L-methionine = N(4)-methylcytidine(1402) in 16S rRNA + S-adenosyl-L-homocysteine + H(+). In terms of biological role, specifically methylates the N4 position of cytidine in position 1402 (C1402) of 16S rRNA. In Lactobacillus helveticus (strain DPC 4571), this protein is Ribosomal RNA small subunit methyltransferase H.